A 326-amino-acid chain; its full sequence is tRNA-modifying protein YgfZ (326 aa).

Folate is bound by residues tryptophan 27 and tryptophan 189.

This sequence belongs to the tRNA-modifying YgfZ family.

The protein localises to the cytoplasm. Functionally, folate-binding protein involved in regulating the level of ATP-DnaA and in the modification of some tRNAs. It is probably a key factor in regulatory networks that act via tRNA modification, such as initiation of chromosomal replication. This chain is tRNA-modifying protein YgfZ, found in Shigella boydii serotype 4 (strain Sb227).